Consider the following 452-residue polypeptide: tRNA modification GTPase MnmE (452 aa).

Positions 21, 78, and 118 each coordinate (6S)-5-formyl-5,6,7,8-tetrahydrofolate. The 162-residue stretch at 214-375 (GMKVVIAGRP…LREHLKQAMG (162 aa)) folds into the TrmE-type G domain. Position 224 (Asn-224) interacts with K(+). GTP is bound by residues 224 to 229 (NAGKSS), 243 to 249 (TDIAGTT), and 268 to 271 (DTAG). Residue Ser-228 coordinates Mg(2+). K(+)-binding residues include Thr-243, Ile-245, and Thr-248. Residue Thr-249 coordinates Mg(2+). A (6S)-5-formyl-5,6,7,8-tetrahydrofolate-binding site is contributed by Lys-452.

This sequence belongs to the TRAFAC class TrmE-Era-EngA-EngB-Septin-like GTPase superfamily. TrmE GTPase family. Homodimer. Heterotetramer of two MnmE and two MnmG subunits. It depends on K(+) as a cofactor.

Its subcellular location is the cytoplasm. Exhibits a very high intrinsic GTPase hydrolysis rate. Involved in the addition of a carboxymethylaminomethyl (cmnm) group at the wobble position (U34) of certain tRNAs, forming tRNA-cmnm(5)s(2)U34. The polypeptide is tRNA modification GTPase MnmE (Haemophilus influenzae (strain ATCC 51907 / DSM 11121 / KW20 / Rd)).